The chain runs to 288 residues: Pantothenate synthetase (288 aa).

30-37 (MGFLHEGH) is an ATP binding site. His37 acts as the Proton donor in catalysis. (R)-pantoate is bound at residue Gln61. Gln61 is a binding site for beta-alanine. ATP is bound at residue 147–150 (GMKD). Gln153 is a binding site for (R)-pantoate. Residue 184-187 (KSSR) coordinates ATP.

Belongs to the pantothenate synthetase family. Homodimer.

It localises to the cytoplasm. The enzyme catalyses (R)-pantoate + beta-alanine + ATP = (R)-pantothenate + AMP + diphosphate + H(+). It functions in the pathway cofactor biosynthesis; (R)-pantothenate biosynthesis; (R)-pantothenate from (R)-pantoate and beta-alanine: step 1/1. In terms of biological role, catalyzes the condensation of pantoate with beta-alanine in an ATP-dependent reaction via a pantoyl-adenylate intermediate. The sequence is that of Pantothenate synthetase from Bacillus licheniformis (strain ATCC 14580 / DSM 13 / JCM 2505 / CCUG 7422 / NBRC 12200 / NCIMB 9375 / NCTC 10341 / NRRL NRS-1264 / Gibson 46).